The chain runs to 229 residues: MSKLSHSEVLNTIRNGLIASCQPVDDGPMDKPEIVAAMAQASLIGGAAGLRIEGVDNLKATRPTVKAPIIAIVKRDLPDSPVRITPFLQDIDDLAAAGADIIAVDGTDRVRPVTIEAALKRIHELGCLAMADCSTLAEGLYCQQLGFDIVGSTMSGYTGGEVPNEPDYQLVKDLKAAGCFVMAEGRYNSPRLAKTAIEIGADCVTVGSALTRLEHIVGWFADEIKTAKV.

The protein belongs to the NanE family.

It catalyses the reaction an N-acyl-D-glucosamine 6-phosphate = an N-acyl-D-mannosamine 6-phosphate. It functions in the pathway amino-sugar metabolism; N-acetylneuraminate degradation; D-fructose 6-phosphate from N-acetylneuraminate: step 3/5. Functionally, converts N-acetylmannosamine-6-phosphate (ManNAc-6-P) to N-acetylglucosamine-6-phosphate (GlcNAc-6-P). The chain is Putative N-acetylmannosamine-6-phosphate 2-epimerase from Actinobacillus pleuropneumoniae serotype 3 (strain JL03).